A 694-amino-acid polypeptide reads, in one-letter code: MTSPRKILVTSALPYANGPIHLGHLVEYIQTDIWVRFQKMRGHDCRYVCADDTHGTPIMLRAEKEGISPEELIARVHGEHLRDFTGFHIEFDNYYSTHSEETRAHAADIYGRLKDRGLIESRAIEQYFDPVKEMFLPDRFIKGECPKCHAKDQYGDSCEVCGTTYSPTDLINPYSVVSGAAPVRRESVHYFFKLGECAEFLKDWTRSGALQTEAANKLNEWFEAGLSDWDISRDAPYFGFEIPDAPGKYFYVWLDAPIGYMGSFQNLCDRLGLDFAEYWKKDSEAELYHFIGKDILYFHALFWPAMLEHSGFRTPTRIFAHGFLTVNGEKMSKSRGTFITAQSYLEQGLNPEWLRYYYACKLNGTMEDIDLSLEDFVARVNSDLVGKYINIASRTAGFVTKFFDGRLDVPMQLADGEALDFLIDRLRDSAEEISGYYDSRDYNKAIRKIMELADEVNIFVNEKKPWEIAKRDDSYSRGYLRVVCAITLNLFRLLTIYLKPILPRLAEAVEGFLKIPSLTWQDAQTLLPQGHTINDYQHLMTRIDPKQVDALVEANRQSLQATAGQPEPHSQVRHAEHQQRQVQPIAETISIDDFAKVDLRIARIANAEHVEGADKLLKLTLDLGGETRTVFAGIKSAYAPETLIGRLTVMVANLAPRKMKFGLSEGMVLAAGPGGGDIFLLSPDEGAQPGMKVK.

A 'HIGH' region motif is present at residues 14–24 (PYANGPIHLGH). Residues Cys145, Cys148, Cys158, and Cys161 each contribute to the Zn(2+) site. The 'KMSKS' region signature appears at 330 to 334 (KMSKS). Residue Lys333 coordinates ATP. The interval 558-579 (SLQATAGQPEPHSQVRHAEHQQ) is disordered. A tRNA-binding domain is found at 593–694 (DFAKVDLRIA…EGAQPGMKVK (102 aa)).

Belongs to the class-I aminoacyl-tRNA synthetase family. MetG type 1 subfamily. As to quaternary structure, homodimer. Zn(2+) is required as a cofactor.

It localises to the cytoplasm. It catalyses the reaction tRNA(Met) + L-methionine + ATP = L-methionyl-tRNA(Met) + AMP + diphosphate. Functionally, is required not only for elongation of protein synthesis but also for the initiation of all mRNA translation through initiator tRNA(fMet) aminoacylation. This is Methionine--tRNA ligase from Methylococcus capsulatus (strain ATCC 33009 / NCIMB 11132 / Bath).